A 447-amino-acid chain; its full sequence is Argininosuccinate synthase (447 aa).

Residues 17-25 (AFSGGLDTS) and Ala43 contribute to the ATP site. Tyr99 provides a ligand contact to L-citrulline. ATP is bound by residues Gly129 and Thr131. Thr131, Asn135, and Asp136 together coordinate L-aspartate. Asn135 is a binding site for L-citrulline. ATP is bound at residue Asp136. Positions 139 and 192 each coordinate L-citrulline. Asp194 contacts ATP. L-citrulline is bound by residues Thr201, Glu203, and Glu280.

This sequence belongs to the argininosuccinate synthase family. Type 2 subfamily. As to quaternary structure, homotetramer.

The protein localises to the cytoplasm. The enzyme catalyses L-citrulline + L-aspartate + ATP = 2-(N(omega)-L-arginino)succinate + AMP + diphosphate + H(+). It functions in the pathway amino-acid biosynthesis; L-arginine biosynthesis; L-arginine from L-ornithine and carbamoyl phosphate: step 2/3. The sequence is that of Argininosuccinate synthase from Shigella boydii serotype 18 (strain CDC 3083-94 / BS512).